We begin with the raw amino-acid sequence, 343 residues long: N-acetyl-gamma-glutamyl-phosphate reductase (343 aa).

The active site involves cysteine 147.

It belongs to the NAGSA dehydrogenase family. Type 1 subfamily.

It is found in the cytoplasm. It carries out the reaction N-acetyl-L-glutamate 5-semialdehyde + phosphate + NADP(+) = N-acetyl-L-glutamyl 5-phosphate + NADPH + H(+). It participates in amino-acid biosynthesis; L-arginine biosynthesis; N(2)-acetyl-L-ornithine from L-glutamate: step 3/4. Catalyzes the NADPH-dependent reduction of N-acetyl-5-glutamyl phosphate to yield N-acetyl-L-glutamate 5-semialdehyde. This chain is N-acetyl-gamma-glutamyl-phosphate reductase, found in Staphylococcus aureus (strain MRSA252).